Reading from the N-terminus, the 385-residue chain is Proteinase-activated receptor 4 (385 aa).

The first 17 residues, 1-17 (MWGRLLLWPLVLGFSLS), serve as a signal peptide directing secretion. Positions 18–47 (GGTQTPSVYDESGSTGGGDDSTPSILPAPR) are cleaved as a propeptide — removed for receptor activation. Residues 21-42 (QTPSVYDESGSTGGGDDSTPSI) form a disordered region. Residues 48–82 (GYPGQVCANDSDTLELPDSSRALLLGWVPTRLVPA) are Extracellular-facing. N-linked (GlcNAc...) asparagine glycosylation is present at Asn56. A helical membrane pass occupies residues 83-103 (LYGLVLVVGLPANGLALWVLA). Residues 104–108 (TQAPR) are Cytoplasmic-facing. Residues 109–129 (LPSTMLLMNLAAADLLLALAL) form a helical membrane-spanning segment. The Extracellular portion of the chain corresponds to 130-151 (PPRIAYHLRGQRWPFGEAACRL). Cysteines 149 and 228 form a disulfide. Residues 152-172 (ATAALYGHMYGSVLLLAAVSL) traverse the membrane as a helical segment. Residues 173-192 (DRYLALVHPLRARALRGRRL) are Cytoplasmic-facing. Residues 193–213 (ALGLCMAAWLMAAALALPLTL) traverse the membrane as a helical segment. The Extracellular portion of the chain corresponds to 214–247 (QRQTFRLARSDRVLCHDALPLDAQASHWQPAFTC). A helical transmembrane segment spans residues 248–268 (LALLGCFLPLLAMLLCYGATL). At 269 to 283 (HTLAASGRRYGHALR) the chain is on the cytoplasmic side. The helical transmembrane segment at 284–304 (LTAVVLASAVAFFVPSNLLLL) threads the bilayer. Over 305 to 319 (LHYSDPSPSAWGNLY) the chain is Extracellular. The chain crosses the membrane as a helical span at residues 320 to 343 (GAYVPSLALSTLNSCVDPFIYYYV). The Cytoplasmic portion of the chain corresponds to 344 to 385 (SAEFRDKVRAGLFQRSPGDTVASKASAEGGSRGMGTHSSLLQ). The disordered stretch occupies residues 362 to 385 (DTVASKASAEGGSRGMGTHSSLLQ).

It belongs to the G-protein coupled receptor 1 family. Post-translationally, a proteolytic cleavage generates a new N-terminus that functions as a tethered ligand. In terms of tissue distribution, widely expressed, with highest levels in lung, pancreas, thyroid, testis and small intestine. Not expressed in brain, kidney, spinal cord and peripheral blood leukocytes. Also detected in platelets.

It is found in the cell membrane. Activated upon interaction by mucunain, a cowhage (Mucuna pruriens) plant cysteine proteinase. In terms of biological role, receptor for activated thrombin or trypsin coupled to G proteins that stimulate phosphoinositide hydrolysis. May play a role in platelets activation. This is Proteinase-activated receptor 4 (F2RL3) from Homo sapiens (Human).